The following is a 950-amino-acid chain: 2-oxoglutarate dehydrogenase E1 component (950 aa).

Belongs to the alpha-ketoglutarate dehydrogenase family. Homodimer. Part of the 2-oxoglutarate dehydrogenase (OGDH) complex composed of E1 (2-oxoglutarate dehydrogenase), E2 (dihydrolipoamide succinyltransferase) and E3 (dihydrolipoamide dehydrogenase); the complex contains multiple copies of the three enzymatic components (E1, E2 and E3). Thiamine diphosphate is required as a cofactor.

It catalyses the reaction N(6)-[(R)-lipoyl]-L-lysyl-[protein] + 2-oxoglutarate + H(+) = N(6)-[(R)-S(8)-succinyldihydrolipoyl]-L-lysyl-[protein] + CO2. Its function is as follows. E1 component of the 2-oxoglutarate dehydrogenase (OGDH) complex which catalyzes the decarboxylation of 2-oxoglutarate, the first step in the conversion of 2-oxoglutarate to succinyl-CoA and CO(2). The sequence is that of 2-oxoglutarate dehydrogenase E1 component from Geobacillus kaustophilus (strain HTA426).